We begin with the raw amino-acid sequence, 472 residues long: Tryptophanase (472 aa).

Lys-270 carries the N6-(pyridoxal phosphate)lysine modification.

Belongs to the beta-eliminating lyase family. In terms of assembly, homotetramer. It depends on pyridoxal 5'-phosphate as a cofactor.

It catalyses the reaction L-tryptophan + H2O = indole + pyruvate + NH4(+). It functions in the pathway amino-acid degradation; L-tryptophan degradation via pyruvate pathway; indole and pyruvate from L-tryptophan: step 1/1. This Haemophilus influenzae protein is Tryptophanase (tnaA).